A 471-amino-acid chain; its full sequence is Alpha-galactosidase 6 (471 aa).

The N-terminal stretch at 1–18 is a signal peptide; the sequence is MFAFYFLTACISLKGVFG. Cysteines 42 and 74 form a disulfide. Substrate is bound by residues Asp72 and Asp73. The N-linked (GlcNAc...) asparagine glycan is linked to Asn105. Cys121 and Cys151 are oxidised to a cystine. Substrate is bound at residue Lys147. Catalysis depends on Asp149, which acts as the Nucleophile. Asn175 is a glycosylation site (N-linked (GlcNAc...) asparagine). Arg205 is a binding site for substrate. Catalysis depends on Asp209, which acts as the Proton donor. 2 disulfide bridges follow: Cys221–Cys237 and Cys223–Cys230. Residue Gln251 participates in substrate binding. Residues Asn270, Asn370, Asn403, Asn422, Asn435, and Asn454 are each glycosylated (N-linked (GlcNAc...) asparagine).

Belongs to the glycosyl hydrolase 27 family. Homotetramer.

Its subcellular location is the secreted. It carries out the reaction Hydrolysis of terminal, non-reducing alpha-D-galactose residues in alpha-D-galactosides, including galactose oligosaccharides, galactomannans and galactolipids.. The chain is Alpha-galactosidase 6 (MEL6) from Saccharomyces cerevisiae (Baker's yeast).